A 222-amino-acid chain; its full sequence is Global nitrogen regulator (222 aa).

N6–R128 is an a nucleoside 3',5'-cyclic phosphate binding site. The HTH crp-type domain maps to R142–V215. A DNA-binding region (H-T-H motif) is located at residues H175–G194.

In terms of biological role, required for full expression of proteins subject to ammonium repression. Transcriptional activator of genes subject to nitrogen control. This is Global nitrogen regulator (ntcA) from Synechococcus elongatus (strain ATCC 33912 / PCC 7942 / FACHB-805) (Anacystis nidulans R2).